The sequence spans 382 residues: Dual-specificity RNA methyltransferase RlmN (382 aa).

The active-site Proton acceptor is Glu-96. Positions 102 to 340 (QNGRGTLCVS…VTVRTTRGDD (239 aa)) constitute a Radical SAM core domain. The cysteines at positions 109 and 345 are disulfide-linked. Residues Cys-116, Cys-120, and Cys-123 each contribute to the [4Fe-4S] cluster site. S-adenosyl-L-methionine is bound by residues 170 to 171 (GE), Ser-202, 224 to 226 (SLH), and Asn-302. Cys-345 serves as the catalytic S-methylcysteine intermediate.

The protein belongs to the radical SAM superfamily. RlmN family. [4Fe-4S] cluster serves as cofactor.

It is found in the cytoplasm. It catalyses the reaction adenosine(2503) in 23S rRNA + 2 reduced [2Fe-2S]-[ferredoxin] + 2 S-adenosyl-L-methionine = 2-methyladenosine(2503) in 23S rRNA + 5'-deoxyadenosine + L-methionine + 2 oxidized [2Fe-2S]-[ferredoxin] + S-adenosyl-L-homocysteine. The catalysed reaction is adenosine(37) in tRNA + 2 reduced [2Fe-2S]-[ferredoxin] + 2 S-adenosyl-L-methionine = 2-methyladenosine(37) in tRNA + 5'-deoxyadenosine + L-methionine + 2 oxidized [2Fe-2S]-[ferredoxin] + S-adenosyl-L-homocysteine. Specifically methylates position 2 of adenine 2503 in 23S rRNA and position 2 of adenine 37 in tRNAs. m2A2503 modification seems to play a crucial role in the proofreading step occurring at the peptidyl transferase center and thus would serve to optimize ribosomal fidelity. The sequence is that of Dual-specificity RNA methyltransferase RlmN from Ectopseudomonas mendocina (strain ymp) (Pseudomonas mendocina).